A 131-amino-acid polypeptide reads, in one-letter code: Putative gamma-taxilin 2 (131 aa).

Belongs to the taxilin family.

This Pan troglodytes (Chimpanzee) protein is Putative gamma-taxilin 2 (TXLNGY).